Here is a 110-residue protein sequence, read N- to C-terminus: Small EDRK-rich factor 1 (110 aa).

Positions 1-30 (MARGNQRELARQKNMKKTQEISKGKRKEDS) are enriched in basic and acidic residues. Positions 1–61 (MARGNQRELA…GPHLPLKAPR (61 aa)) are disordered. The tract at residues 11 to 17 (RQKNMKK) is required for SNCA binding. The segment covering 34–50 (SQRKQSSGGQKSESKMS) has biased composition (low complexity).

The protein belongs to the SERF family. Interacts with SNCA; this interaction promotes the aggregation of SNCA. Isoform Long is predominantly expressed in heart, brain and skeletal muscle. Isoform Short and Isoform Long are expressed throughout the central nervous system, including spinal cord.

The protein resides in the cytoplasm. It is found in the cytosol. It localises to the nucleus. In terms of biological role, positive regulator of amyloid protein aggregation and proteotoxicity. Induces conformational changes in amyloid proteins, such as APP, HTT, and SNCA, driving them into compact formations preceding the formation of aggregates. This is Small EDRK-rich factor 1 (SERF1A) from Homo sapiens (Human).